Reading from the N-terminus, the 689-residue chain is Protein SDA1 homolog (689 aa).

Disordered regions lie at residues 227–260 (DEKK…TKNK), 485–512 (EQEK…DGEW), and 623–689 (TDRK…RLMK). Residues 258–319 (KNKKKLDKAM…RFEVKLMHMD (62 aa)) are a coiled coil. The span at 492-512 (PEEDDGWESASLSDDDEDGEW) shows a compositional bias: acidic residues. Residues 670 to 681 (RDKQIALRDSLL) show a composition bias toward basic and acidic residues.

The protein belongs to the SDA1 family.

The protein localises to the nucleus. It is found in the nucleolus. Required for 60S pre-ribosomal subunits export to the cytoplasm. The chain is Protein SDA1 homolog (sdad1) from Xenopus laevis (African clawed frog).